Here is a 622-residue protein sequence, read N- to C-terminus: Cilia- and flagella-associated protein 206 (622 aa).

The disordered stretch occupies residues 571 to 592 (QVYPPKDTSTQSMREDSTGVPR).

The protein belongs to the CFAP206 family.

The protein localises to the cytoplasm. The protein resides in the cytoskeleton. Its subcellular location is the cilium axoneme. It is found in the cilium basal body. Its function is as follows. Essential for sperm motility and is involved in the regulation of the beating frequency of motile cilia on the epithelial cells of the respiratory tract. Required for the establishment of radial spokes in sperm flagella. In Macaca fascicularis (Crab-eating macaque), this protein is Cilia- and flagella-associated protein 206.